The primary structure comprises 492 residues: UPF0236 protein TTE1650/TTE2708 (492 aa).

The protein belongs to the UPF0236 family.

The polypeptide is UPF0236 protein TTE1650/TTE2708 (Caldanaerobacter subterraneus subsp. tengcongensis (strain DSM 15242 / JCM 11007 / NBRC 100824 / MB4) (Thermoanaerobacter tengcongensis)).